We begin with the raw amino-acid sequence, 234 residues long: 1-(5-phosphoribosyl)-5-[(5-phosphoribosylamino)methylideneamino] imidazole-4-carboxamide isomerase (234 aa).

Asp-9 serves as the catalytic Proton acceptor. Asp-131 (proton donor) is an active-site residue.

It belongs to the HisA/HisF family.

It localises to the cytoplasm. The catalysed reaction is 1-(5-phospho-beta-D-ribosyl)-5-[(5-phospho-beta-D-ribosylamino)methylideneamino]imidazole-4-carboxamide = 5-[(5-phospho-1-deoxy-D-ribulos-1-ylimino)methylamino]-1-(5-phospho-beta-D-ribosyl)imidazole-4-carboxamide. It participates in amino-acid biosynthesis; L-histidine biosynthesis; L-histidine from 5-phospho-alpha-D-ribose 1-diphosphate: step 4/9. This is 1-(5-phosphoribosyl)-5-[(5-phosphoribosylamino)methylideneamino] imidazole-4-carboxamide isomerase from Staphylococcus aureus (strain bovine RF122 / ET3-1).